The primary structure comprises 570 residues: Pleckstrin homology domain-containing family D member 1 (570 aa).

Basic and acidic residues predominate over residues 1-13 (MTTKTTPKELKAK). The segment at 1–42 (MTTKTTPKELKAKKESKKKGSAPEPPKNGPPRTSPPNTIEKK) is disordered. Residues 23–34 (PEPPKNGPPRTS) are compositionally biased toward pro residues. A PH domain is found at 83–192 (GVQNYGILMK…WLKALRSATK (110 aa)). Residues 202–448 (ETMIRELENR…TGAQMTELQE (247 aa)) adopt a coiled-coil conformation. Over residues 542–551 (SKRGIRSSFR) the composition is skewed to basic residues. Positions 542-570 (SKRGIRSSFRKKTDSITTQPREKEPLMQL) are disordered. The segment covering 561 to 570 (PREKEPLMQL) has biased composition (basic and acidic residues).

This sequence belongs to the PLEKHD1 family.

The chain is Pleckstrin homology domain-containing family D member 1 from Caenorhabditis elegans.